A 190-amino-acid chain; its full sequence is Peptidyl-prolyl cis-trans isomerase A (190 aa).

A signal peptide spans 1–24 (MFKSTLAAMAAVFALSALSPAAMA). Positions 27–188 (GDPHVLLTTS…KPVVILSAKV (162 aa)) constitute a PPIase cyclophilin-type domain.

It belongs to the cyclophilin-type PPIase family.

It is found in the periplasm. The enzyme catalyses [protein]-peptidylproline (omega=180) = [protein]-peptidylproline (omega=0). Functionally, PPIases accelerate the folding of proteins. It catalyzes the cis-trans isomerization of proline imidic peptide bonds in oligopeptides. This is Peptidyl-prolyl cis-trans isomerase A (ppiA) from Escherichia coli O157:H7.